Reading from the N-terminus, the 238-residue chain is Ribosomal RNA small subunit methyltransferase E 1 (238 aa).

The protein belongs to the RNA methyltransferase RsmE family.

The protein resides in the cytoplasm. It carries out the reaction uridine(1498) in 16S rRNA + S-adenosyl-L-methionine = N(3)-methyluridine(1498) in 16S rRNA + S-adenosyl-L-homocysteine + H(+). Specifically methylates the N3 position of the uracil ring of uridine 1498 (m3U1498) in 16S rRNA. Acts on the fully assembled 30S ribosomal subunit. The polypeptide is Ribosomal RNA small subunit methyltransferase E 1 (rsmE1) (Borreliella burgdorferi (strain ATCC 35210 / DSM 4680 / CIP 102532 / B31) (Borrelia burgdorferi)).